The sequence spans 2377 residues: MSDGAAEKQSGTPGFLTPPAPVPKNGSSSDSSVGEKLGATVADSGVGRTEEYRRRRHTMDKDSRGAAATTTPTEHRFFRRSVICDSNATALELPGLPLSIPQPSVPAVVPQSAPPEPHREETLTATVASQVSQQPSAAASPGEQAVVGSATTTVPSSTSKDRPVSQPSLVGSKEEPPPSRSGSGSGGASAKEAQEDRSQQQDDIEELETKAVGMSNDGRFLKFDIEIGRGSFKTVYKGLDTETTVEVAWCELQDRKLTKSERQRFKEEAEMLKGLQHPNIVRFYDSWESTVKGKKCIVLVTELMTSGTLKTYLKRFKVMKIKVLRSWCRQILKGLQFLHTRTPPIIHRDLKCDNIFITGPTGSVKIGDLGLATLKRASFAKSVIGTPEFMAPEMYEEKYDESVDVYAFGMCMLEMATSEYPYSECQNAAQIYRRVTSGVKPASFDKVAIPEVKEIIEGCIRQNKDERYSIKDLLNHAFFQEETGVRVELAEEDDGEKIAIKLWLRIEDIKKLKGKYKDNEAIEFSFDLERDVPEDVAQEMVESGYVCEGDHKTMAKAIKDRVSLIKRKREQRQLVREEQEKRKQEESSFKQQNEQQASVSQAGIQQLSAASTGIPTAPATSASVSTQVEPEEPEADQHQQLQYQQPSISVLSDGTIDSGQGSSVFTESRVSSQQTVSYGSQHEQAHSTGTAPGHTVSSIQAQSQPHGVYPPSSMAQGQNQGQPSSSLAGVLSSQPIQHPQQQGIQPTVPSQQAVQYSLPQAASSSEGTTAQPVSQPQVSAGTQLPVSQTVATVQGEPHIPVSTQPSVVPVHSGAHFLPMGQPIPTSLLPQYPVSQIPISTPHVSTAQTGFSSVPITMAAGINQPLLTLASSATASSIPGGSPVVPNQLPTLLQPVNQLQSQVHPQLLQPTTVQSIGIPANLGQAAEGPLPSGDVLYQGFPSRLPPQYPGDSNIAPSSNVASVCIHSTVLAPPSMPTEALATQGYFPTVVQPYVESTPLVPMGSVGGQVQVSQPAVSLTQQPPTTSSQQAVLESTQGVSQAAPPEQTPITQSQPTQPVPLVTSADSAHSDVASGMSDGNENAPSSSGRHEGRTTKRHYRKSVRSRSRHEKTSRPKLRILNVSNKGDRVVECQLETHNRKMVTFKFDLDGDNPEEIATIMVNNDFILAIERESFVAQVREIIEKADEMLSEDVSVEPEGDQGLESLQGKDDYGFPGSQKLEGEFKQPIAVSSMPQQIGVPTSSLTQVVHSAGRRFIVSPVPESRLRESKVFTSDISDPVVASTSQAPGMNLSHSASSLSLQQAFSELKHGQMTEGPNTAPPNFNHMAGPTFSPFLASIAGVQTVAASTPSVSVPITSSPLNDISTSVMQSETALPTEKGIVGVTTTSTGVVASGGLTTMSVSESPTSSSAVSSSTVPAVVTVSTPSQPVQASTSGSIASSTGSFPPGTFSTTTATTMGSVVAPDAKPPTVLLQQVASNTAGVAIVTSVSTTTPFPGMASQPSLPLSSSTSAPTLAETMVVSAHSLDKASHSSTAGLGLSFCAPSSSSSSGTAVSTSVSQPGMVHPLVISSAVVSTPGLPQPVVPTSTPLLPQVPNIPPLVQPVVNVPAVQQTLIHSQPQPALLPNQPHTHCPEMDADTQSKAPGIDDIKTLEEKLRSLFSEHSSSGTQHASVSLETPLVVETTVTPGITTTAVAPSKLMTSTTSTCLPPTSLPLGAAGMPVMPVGTPGQVSTPGTHASAPVGTATGVKPGTTPPKPTKTVVPPVGTELSAGTVPCEQLPPFPGPSLIQSQQPLEDLDAQLRRTLSPETITVAPAVGPLSTMSSTTVTEAGTRLQKDGTEGHVTATSSGAGVVKMGRFQVSVTMDDAQKERKNRSEDTKSVHFESSTSESSVLSSSSPESTLVKPEPNGISISGISLDVPDSTHKAPTPEAKSDAGQPTKVGRFQVTTTANKVGRFSVSRTEDKVTELKKEGPVTSPPFRDSEQTVIPAVIPKKEKPELAEPSHLNGPSSDLEAAFLSRGTEDGSGSPHSPPHLCSKSLPVQNLSQSLSNSFNSSYMSSDNESDIEDEDLRLELRRLREKHLKEIQDLQSRQKHEIESLYTKLGKVPPAVIIPPAAPLSGRRRRPTKSKGSKSSRSSSLGNKSPQLSGNLSGQSGTSVLHPQQTLHPAGNTPETGHNQLLQPLKPSPSSDNLYSAFTSDGAISVPSLSAPGQGTSSTNTVGGTVSSQAAQAQPPAMTSSRKGTFTDDLHKLVDNWARDAMNLSGRRGSKGHMNYEGPGMARKFSAPGQLCVPMTSNLGGSTPISAASATSLGHFTKSMCPPQQYGFPPAPFGTQWSGTGGPAPQPLGQFQPVGTASLQNFNISNLQKSISNPPGSNLRTT.

Disordered regions lie at residues methionine 1–arginine 79 and leucine 93–aspartate 203. Residues threonine 17 and threonine 58 each carry the phosphothreonine modification. Basic and acidic residues predominate over residues arginine 48–arginine 64. Low complexity-rich tracts occupy residues proline 101–glutamine 111 and valine 127–proline 141. A compositionally biased stretch (polar residues) spans serine 149 to threonine 158. Residues serine 165 and serine 172 each carry the phosphoserine modification. A Protein kinase domain is found at leucine 221 to phenylalanine 479. Serine 231 contacts ATP. 2 residues coordinate chloride: phenylalanine 283 and leucine 299. ATP-binding positions include threonine 301 to methionine 304 and lysine 351. Aspartate 368 (proton acceptor) is an active-site residue. Residues leucine 369 and leucine 371 each coordinate chloride. Phosphoserine; by autocatalysis occurs at positions 378 and 382. The interval glutamate 488–alanine 555 is autoinhibitory domain. Over residues glutamine 573–serine 588 the composition is skewed to basic and acidic residues. Disordered stretches follow at residues glutamine 573–threonine 782 and proline 1013–lysine 1114. Polar residues-rich tracts occupy residues asparagine 593–valine 628, histidine 638–proline 705, and serine 713–serine 733. Residues glutamate 629–glutamine 639 form an interaction with KLHL3 region. The segment covering glutamine 734–proline 746 has biased composition (low complexity). The span at threonine 747–threonine 782 shows a compositional bias: polar residues. The segment covering threonine 1018–glutamine 1028 has biased composition (low complexity). A compositionally biased stretch (polar residues) spans alanine 1029–serine 1038. Residues proline 1042 to proline 1058 show a composition bias toward low complexity. Residues serine 1075–serine 1085 are compositionally biased toward polar residues. Positions threonine 1093–lysine 1114 are enriched in basic residues. The RFXV motif 1 signature appears at arginine 1252–valine 1255. Serine 1256 is modified (phosphoserine). 2 disordered regions span residues glycine 1726–proline 1760 and threonine 1818–alanine 1847. Low complexity predominate over residues proline 1738–glycine 1748. Residue threonine 1843 is modified to Phosphothreonine. An RFXV motif 2 motif is present at residues arginine 1854–valine 1857. Positions threonine 1860–threonine 1945 are disordered. Residues aspartate 1863–histidine 1879 are compositionally biased toward basic and acidic residues. Residues serine 1882 to valine 1900 show a composition bias toward low complexity. 2 short sequence motifs (RFXV motif) span residues arginine 1940–valine 1943 and arginine 1952–valine 1955. Basic and acidic residues predominate over residues glutamate 1959–glycine 1969. 5 disordered regions span residues glutamate 1959–isoleucine 1984, proline 1989–aspartate 2008, serine 2015–aspartate 2064, valine 2107–serine 2191, and serine 2203–glycine 2239. The residue at position 1973 (serine 1973) is a Phosphoserine. Over residues proline 1989–glutamate 1998 the composition is skewed to basic and acidic residues. Phosphoserine is present on residues serine 2006, serine 2007, serine 2022, serine 2024, and serine 2027. Over residues serine 2035–aspartate 2057 the composition is skewed to low complexity. Position 2116 is a phosphoserine (serine 2116). Positions glycine 2117–lysine 2129 are enriched in basic residues. Residues serine 2130–serine 2140 show a composition bias toward low complexity. Positions proline 2141 to serine 2191 are enriched in polar residues. Over residues glycine 2208–alanine 2232 the composition is skewed to low complexity. The interval serine 2236–alanine 2256 is amphipathic alpha-helix. Residues serine 2265 and serine 2281 each carry the phosphoserine modification. The interval proline 2325–glycine 2344 is disordered. Residues serine 2365 and serine 2367 each carry the phosphoserine modification.

The protein belongs to the protein kinase superfamily. Ser/Thr protein kinase family. WNK subfamily. In terms of assembly, interacts with WNK3. Interacts with WNK4; inhibiting the activity of WNK4. Interacts with SGK1; promoting its activation. Associates with the mTORC2 complex. Interacts with UVRAG. Interacts with isoform 1; inhibiting isoform 1 activity. It depends on Mg(2+) as a cofactor. Post-translationally, autophosphorylated at Ser-378 and Ser-382, promoting its activity. Autophosphorylation at Ser-382 is inhibited by intracellular calcium. Phosphorylation at Thr-58 increases ability to activate SGK1. Ubiquitinated by the BCR(KLHL3) complex, leading to its degradation. Also ubiquitinated by the BCR(KLHL2) complex. In terms of processing, may be O-glycosylated. As to expression, widely expressed in both adult and embryonic tissue, with highest levels observed in the testis and lower levels in heart, lung, kidney, placenta, brain and skeletal muscle. Expressed in pancreatic duct. Two isoforms are expressed in heart, a single shorter isoform in the kidney. Locates to the distal convoluted tubule, the medullary collecting duct and the cortical collecting duct of the kidney. In terms of tissue distribution, restricted to the nervous system, expressed preferentially in sensory neurons than in motor neurons and in general more abundant in axons than in cell bodies (at protein level). In the DRG, predominantly expressed in the satellite cells that envelop sensory neurons, but low expression also observed in the cell bodies of neurons (at protein level). In the sciatic nerve, expressed in the Schwann cells that surround axons and in a mosaic distribution of axons (at protein level). In the spinal cord, expressed in superficial layers (LI and LII), as well as in the fibers of the Lissauer tract (at protein level). Also detected in the axon fibers of dorsolateral funiculus and lateral funiculus (at protein level).

It is found in the cytoplasm. It localises to the nucleus. Its subcellular location is the cytoskeleton. The protein localises to the spindle. It catalyses the reaction L-seryl-[protein] + ATP = O-phospho-L-seryl-[protein] + ADP + H(+). The catalysed reaction is L-threonyl-[protein] + ATP = O-phospho-L-threonyl-[protein] + ADP + H(+). With respect to regulation, activated in response to hyperosmotic stress: cell shrinkage promotes formation of a membraneless compartment that concentrates WNK1 with its substrates, OXSR1/OSR1 and STK39/SPAK. Activation requires autophosphorylation of Ser-382 and, to a lower extent, Ser-378. Autophosphorylation and subsequent activation is inhibited by increases in intracellular ionic strength: Cl(-) potently inhibits WNK1 kinase activity via direct binding. Also inhibited by K(+) ions. Functionally, serine/threonine-protein kinase component of the WNK1-SPAK/OSR1 kinase cascade, which acts as a key regulator of blood pressure and regulatory volume increase by promoting ion influx. WNK1 mediates regulatory volume increase in response to hyperosmotic stress by acting as a molecular crowding sensor, which senses cell shrinkage and mediates formation of a membraneless compartment by undergoing liquid-liquid phase separation. The membraneless compartment concentrates WNK1 with its substrates, OXSR1/OSR1 and STK39/SPAK, promoting WNK1-dependent phosphorylation and activation of downstream kinases OXSR1/OSR1 and STK39/SPAK. Following activation, OXSR1/OSR1 and STK39/SPAK catalyze phosphorylation of ion cotransporters SLC12A1/NKCC2, SLC12A2/NKCC1, SLC12A5/KCC2 and SLC12A6/KCC3, regulating their activity. Phosphorylation of Na-K-Cl cotransporters SLC12A2/NKCC1 and SLC12A2/NKCC1 promote their activation and ion influx; simultaneously, phosphorylation of K-Cl cotransporters SLC12A5/KCC2 and SLC12A6/KCC3 inhibit their activity, blocking ion efflux. Also acts as a regulator of angiogenesis in endothelial cells. Also acts independently of the WNK1-SPAK/OSR1 kinase cascade by catalyzing phosphorylation of other substrates, such as SYT2, PCF11 and NEDD4L. Mediates phosphorylation of SYT2, regulating SYT2 association with phospholipids and membrane-binding. Regulates mRNA export in the nucleus by mediating phosphorylation of PCF11, thereby decreasing the association between PCF11 and POLR2A/RNA polymerase II and promoting mRNA export to the cytoplasm. Acts as a negative regulator of autophagy. Required for the abscission step during mitosis, independently of the WNK1-SPAK/OSR1 kinase cascade. WNK1 may also play a role in actin cytoskeletal reorganization. Also acts as a scaffold protein independently of its protein kinase activity: negatively regulates cell membrane localization of various transporters and channels, such as SLC4A4, SLC26A6, SLC26A9, TRPV4 and CFTR. Involved in the regulation of epithelial Na(+) channel (ENaC) by promoting activation of SGK1 in a kinase-independent manner: probably acts as a scaffold protein that promotes the recruitment of SGK1 to the mTORC2 complex in response to chloride, leading to mTORC2-dependent phosphorylation and activation of SGK1. Acts as an assembly factor for the ER membrane protein complex independently of its protein kinase activity: associates with EMC2 in the cytoplasm via its amphipathic alpha-helix, and prevents EMC2 ubiquitination and subsequent degradation, thereby promoting EMC2 stabilization. Kinase-defective isoform specifically expressed in kidney, which acts as a dominant-negative regulator of the longer isoform 1. Does not directly inhibit WNK4 and has no direct effect on sodium and chloride ion transport. Down-regulates sodium-chloride cotransporter activity indirectly by inhibiting isoform 1, it associates with isoform 1 and attenuates its kinase activity. In kidney, may play an important role regulating sodium and potassium balance. The polypeptide is Serine/threonine-protein kinase WNK1 (Mus musculus (Mouse)).